The following is a 753-amino-acid chain: 5-methyltetrahydropteroyltriglutamate--homocysteine methyltransferase (753 aa).

5-methyltetrahydropteroyltri-L-glutamate-binding positions include 17–20 and Lys-117; that span reads RELK. Residues 431-433 and Glu-484 each bind L-homocysteine; that span reads IGS. Residues 431-433 and Glu-484 contribute to the L-methionine site; that span reads IGS. Residues 515-516 and Trp-561 contribute to the 5-methyltetrahydropteroyltri-L-glutamate site; that span reads RC. Residue Asp-599 coordinates L-homocysteine. Asp-599 is a binding site for L-methionine. Glu-605 is a 5-methyltetrahydropteroyltri-L-glutamate binding site. Residues His-641, Cys-643, and Glu-665 each contribute to the Zn(2+) site. His-694 serves as the catalytic Proton donor. Cys-726 is a binding site for Zn(2+).

This sequence belongs to the vitamin-B12 independent methionine synthase family. Zn(2+) is required as a cofactor.

The catalysed reaction is 5-methyltetrahydropteroyltri-L-glutamate + L-homocysteine = tetrahydropteroyltri-L-glutamate + L-methionine. Its pathway is amino-acid biosynthesis; L-methionine biosynthesis via de novo pathway; L-methionine from L-homocysteine (MetE route): step 1/1. In terms of biological role, catalyzes the transfer of a methyl group from 5-methyltetrahydrofolate to homocysteine resulting in methionine formation. The sequence is that of 5-methyltetrahydropteroyltriglutamate--homocysteine methyltransferase from Klebsiella pneumoniae (strain 342).